Here is a 758-residue protein sequence, read N- to C-terminus: Glucan endo-1,3-beta-D-glucosidase (758 aa).

A signal peptide (tat-type signal) is located at residues 1-34 (MSHASRRRWRRATTSAATAALLCGALLTFPSAPA). Residues 38–251 (VRLGSGSYTT…SGYASVALLP (214 aa)) form a beta-sandwich subdomain region. In terms of domain architecture, GH81 spans 38–704 (VRLGSGSYTT…QWLSTLAEFG (667 aa)). The interval 252 to 342 (SPDDFDRYAP…EGDRFTTELT (91 aa)) is alpha/beta subdomain. Residues 352–704 (TVDSADHQRL…QWLSTLAEFG (353 aa)) are (alpha/beta)6 barrel subdomain. (1,3-beta-D-glucosyl)n contacts are provided by tyrosine 382, lysine 386, aspartate 457, histidine 461, asparagine 532, glutamate 534, and glutamate 538. Residue aspartate 457 is part of the active site. Active-site residues include glutamate 534 and glutamate 538.

Belongs to the glycosyl hydrolase 81 family. In terms of processing, predicted to be exported by the Tat system. The position of the signal peptide cleavage has not been experimentally proven.

It is found in the secreted. It carries out the reaction Hydrolysis of (1-&gt;3)-beta-D-glucosidic linkages in (1-&gt;3)-beta-D-glucans.. In terms of biological role, cleaves internal linkages in 1,3-beta-glucan. May contribute to biomass degradation by hydrolyzing the 1,3-beta-linked plant polymer callose that is present in decomposing plant tissue. This is Glucan endo-1,3-beta-D-glucosidase from Thermobifida fusca (strain YX).